The primary structure comprises 399 residues: Zinc finger TRAF-type-containing protein 1 (399 aa).

Gly residues predominate over residues 1 to 13; that stretch reads MSGAEEAGGGGPA. The segment at 1 to 20 is disordered; it reads MSGAEEAGGGGPAAGPAGAV. An RING-type; degenerate zinc finger spans residues 106–151; it reads CTVCLDLPKASVYQCTNGHLMCAGCFIHLLADARLKEEQATCPNCR. Residues 152–210 form a TRAF-type zinc finger; it reads CEISKSLCCRNLAVEKAVSELPSECGFCLRQFPRSLLERHQKEECQDRVTQCKYKRIGC.

Belongs to the ZFTRAF1 family. Interacts with LGALS3.

The protein localises to the cytoplasm. It localises to the perinuclear region. This chain is Zinc finger TRAF-type-containing protein 1, found in Rattus norvegicus (Rat).